An 836-amino-acid polypeptide reads, in one-letter code: Homeobox-leucine zipper protein ATHB-15 (836 aa).

A DNA-binding region (homeobox) is located at residues 14-77 (DNGKYVRYTP…NRRCREKQRK (64 aa)). A coiled-coil region spans residues 72-115 (REKQRKEASRLQAVNRKLTAMNKLLMEENDRLQKQVSQLVHENS). In terms of domain architecture, START spans 151–379 (RDASPAGLLS…IAQEVTQTNS (229 aa)).

Belongs to the HD-ZIP homeobox family. Class III subfamily. Interacts with ESR1 and ESR2. Interacts with ZPR3. Highly expressed the developing vascular elements and the adaxial portion of cotyledons. Expressed in developing ovules, stamens and carpels. Expressed in procambium and shoot meristem.

Its subcellular location is the nucleus. Probable transcription factor involved in the regulation of meristem development to promote lateral organ formation. May regulates procambial and vascular tissue formation or maintenance, and vascular development in inflorescence stems. The polypeptide is Homeobox-leucine zipper protein ATHB-15 (ATHB-15) (Arabidopsis thaliana (Mouse-ear cress)).